The primary structure comprises 322 residues: Beta-ketoacyl-[acyl-carrier-protein] synthase III (322 aa).

Residues C113 and H249 contribute to the active site. The segment at 250–254 is ACP-binding; that stretch reads QANLR. The active site involves N279.

Belongs to the thiolase-like superfamily. FabH family. In terms of assembly, homodimer.

The protein localises to the cytoplasm. The enzyme catalyses malonyl-[ACP] + acetyl-CoA + H(+) = 3-oxobutanoyl-[ACP] + CO2 + CoA. It participates in lipid metabolism; fatty acid biosynthesis. Its function is as follows. Catalyzes the condensation reaction of fatty acid synthesis by the addition to an acyl acceptor of two carbons from malonyl-ACP. Catalyzes the first condensation reaction which initiates fatty acid synthesis and may therefore play a role in governing the total rate of fatty acid production. Possesses both acetoacetyl-ACP synthase and acetyl transacylase activities. Its substrate specificity determines the biosynthesis of branched-chain and/or straight-chain of fatty acids. The polypeptide is Beta-ketoacyl-[acyl-carrier-protein] synthase III (Marinobacter nauticus (strain ATCC 700491 / DSM 11845 / VT8) (Marinobacter aquaeolei)).